We begin with the raw amino-acid sequence, 675 residues long: Collagen alpha-3(IX) chain (675 aa).

The N-terminal stretch at 1 to 21 (MTVFPTLGLLFLCQLLATTSA) is a signal peptide. Disordered regions lie at residues 22 to 517 (QRVG…KEAS) and 542 to 660 (KPLS…ICDT). Positions 25–515 (GPQGPPGPRG…TGKPGPPGKE (491 aa)) are triple-helical region 3 (COL3). Pro residues-rich tracts occupy residues 27-38 (QGPPGPRGPPGP) and 51-60 (SGLPGPPGPK). Over residues 62–87 (APGKPGAAGEAGLPGLPGVDGLTGTD) the composition is skewed to low complexity. The span at 105–125 (AGPPGPAGKGLPGPPGPPGPS) shows a compositional bias: pro residues. The span at 126–135 (GLPGGNGFRG) shows a compositional bias: gly residues. Composition is skewed to pro residues over residues 136-155 (PPGPSGLPGFPGPPGPPGPP) and 173-184 (LCPPGPPGPPGM). The segment covering 218–233 (PGSVGLQGPRGLRGLP) has biased composition (low complexity). Positions 242–244 (RGD) match the Cell attachment site motif. Positions 301-317 (KDGRDGAPGLDGEKGDA) are enriched in basic and acidic residues. Positions 361-374 (EPGIPGDVGIPGDR) are enriched in low complexity. Asn-479 carries an N-linked (GlcNAc...) asparagine glycan. Residues 481–508 (TAGAPGIPGHPGPMGHQGEQGVPGITGK) show a composition bias toward low complexity. The segment at 516-546 (ASEQHIRELCGEMINDQIAQLAANLRKPLSP) is nonhelical region 3 (NC3). The segment at 547–626 (GMTGRPGPAG…QGLPGVPGIS (80 aa)) is triple-helical region 2 (COL2). Positions 569 to 582 (HPGARGPPGYRGPT) are enriched in low complexity. The Cell attachment site signature appears at 591 to 593 (RGD). Over residues 613 to 624 (DQGPQGLPGVPG) the composition is skewed to low complexity. The nonhelical region 2 (NC2) stretch occupies residues 627–631 (KNGRD). A triple-helical region 1 (COL1) region spans residues 632–658 (GAQGEPGLPGDPGTPGAVGAQGTPGIC). Positions 659 to 675 (DTSACMGAVGASTSKKS) are nonhelical region 1 (NC1).

The protein belongs to the fibril-associated collagens with interrupted helices (FACIT) family. In terms of assembly, trimers composed of three different chains: alpha 1(IX), alpha 2(IX), and alpha 3(IX). Prolines at the third position of the tripeptide repeating unit (G-X-Y) are hydroxylated in some or all of the chains.

It is found in the secreted. Its subcellular location is the extracellular space. The protein localises to the extracellular matrix. Its function is as follows. Collagen type IX is a minor cartilage non-fibrillar collagen. It is associated with type II collagen fibrils. This Gallus gallus (Chicken) protein is Collagen alpha-3(IX) chain (COL9A3).